The primary structure comprises 347 residues: NADH-ubiquinone oxidoreductase chain 2 (347 aa).

The next 10 membrane-spanning stretches (helical) occupy residues 3-23 (PIIL…TMIS), 25-45 (HWLL…PILM), 59-79 (YFLT…INTA), 96-116 (LVTM…FWVP), 127-147 (GMLL…QIFP), 150-170 (NPNI…WGGL), 193-213 (ILMY…MLTI), 240-260 (ITLT…LTGF), 274-294 (SNIM…YFYM), and 323-343 (IFLL…SPAL).

This sequence belongs to the complex I subunit 2 family. As to quaternary structure, core subunit of respiratory chain NADH dehydrogenase (Complex I) which is composed of 45 different subunits. Interacts with TMEM242.

The protein localises to the mitochondrion inner membrane. The catalysed reaction is a ubiquinone + NADH + 5 H(+)(in) = a ubiquinol + NAD(+) + 4 H(+)(out). In terms of biological role, core subunit of the mitochondrial membrane respiratory chain NADH dehydrogenase (Complex I) which catalyzes electron transfer from NADH through the respiratory chain, using ubiquinone as an electron acceptor. Essential for the catalytic activity and assembly of complex I. In Lemur catta (Ring-tailed lemur), this protein is NADH-ubiquinone oxidoreductase chain 2.